Consider the following 712-residue polypeptide: Golgin candidate 3 (712 aa).

Positions 23-49 (DEEEDDLHKYGSANGVSNSDRRNSSGF) are disordered. The span at 36-49 (NGVSNSDRRNSSGF) shows a compositional bias: polar residues. Positions 65–134 (AHHEIERYKA…LKEARTDISR (70 aa)) form a coiled coil. Positions 135 to 150 (GSNNYAIKGNNDQSPN) are enriched in polar residues. 2 disordered regions span residues 135–176 (GSNN…TDSF) and 306–347 (ESRK…MEQS). Coiled-coil stretches lie at residues 197 to 313 (QATE…LTNS), 340 to 558 (GKEE…LNRM), and 659 to 690 (LKDAEERERREAEEAAASKAKQDSERTRQEAA). Basic and acidic residues predominate over residues 328–344 (STLDKEKPESFPGKEEM). Residues 557–608 (RMSMESDYLVDRRIVIKLLVTYFQKNHNKEVLDLMVRMLGFSEEDKERIGAA) form the GRIP domain. The interval 666 to 712 (ERREAEEAAASKAKQDSERTRQEAALHDSEFSTVPLRSSESNQRLSR) is disordered. The segment covering 678–695 (AKQDSERTRQEAALHDSE) has biased composition (basic and acidic residues). Polar residues predominate over residues 696–712 (FSTVPLRSSESNQRLSR).

As to quaternary structure, interacts with ARF1; preferentially with the active form of the protein.

Its subcellular location is the golgi apparatus. The protein resides in the endosome. Golgi matrix protein playing a role in tethering of vesicles to Golgi membranes and in maintaining the overall structure of the Golgi apparatus. The sequence is that of Golgin candidate 3 (GC3) from Arabidopsis thaliana (Mouse-ear cress).